The chain runs to 335 residues: Zinc-type alcohol dehydrogenase-like protein SAR2277 (335 aa).

This sequence belongs to the zinc-containing alcohol dehydrogenase family. Quinone oxidoreductase subfamily.

The polypeptide is Zinc-type alcohol dehydrogenase-like protein SAR2277 (Staphylococcus aureus (strain MRSA252)).